A 1401-amino-acid chain; its full sequence is MKSCGVSLATAAAAAAAAAFGDEEKKMAAGKASGESEEASPSLTAEEREALGGLDSRLFGFVRFHEDGARMKALLGKAVRCYESLILKAEGKVESDFFCQLGHFNLLLEDYPKALSAYQRYYSLQSDYWKNAAFLYGLGLVYFHYNAFQWAIKAFQEVLYVDPSFCRAKEIHLRLGLMFKVNTDYESSLKHFQLALVDCNPCTLSNAEIQFHIAHLYETQRKYHSAKEAYEQLLQTENLSAQVKATILQQLGWMHHTVDLLGDKATKESYAIQYLQKSLEADPNSGQSWYFLGRCYSSIGKVQDAFISYRQSIDKSEASADTWCSIGVLYQQQNQPMDALQAYICAVQLDHGHAAAWMDLGTLYESCNQPQDAIKCYLNATRSKNCSNTSGLAARIKYLQAQLCNLPQGSLQNKTKLLPSIEEAWSLPIPAELTSRQGAMNTAQQNTSDNWSGGNAPPPVEQQTHSWCLTPQKLQHLEQLRANRNNLNPAQKLMLEQLESQFVLMQQHQMRQTGVAQVRPTGILNGPTVDSSLPTNSVSGQQPQLPLTRMPSVSQPGVHTACPRQTLANGPFSAGHVPCSTSRTLGSTDTVLIGNNHVTGSGSNGNVPYLQRNAPTLPHNRTNLTSSTEEPWKNQLSNSTQGLHKGPSSHLAGPNGERPLSSTGPSQHLQAAGSGIQNQNGHPTLPSNSVTQGAALNHLSSHTATSGGQQGITLTKESKPSGNTLTVPETSRQTGETPNSTASVEGLPNHVHQVMADAVCSPSHGDSKSPGLLSSDNPQLSALLMGKANNNVGPGTCDKVNNIHPTVHTKTDNSVASSPSSAISTATPSPKSTEQTTTNSVTSLNSPHSGLHTINGEGMEESQSPIKTDLLLVSHRPSPQIIPSMSVSIYPSSAEVLKACRNLGKNGLSNSSILLDKCPPPRPPSSPYPPLPKDKLNPPTPSIYLENKRDAFFPPLHQFCTNPNNPVTVIRGLAGALKLDLGLFSTKTLVEANNEHMVEVRTQLLQPADENWDPTGTKKIWHCESNRSHTTIAKYAQYQASSFQESLREENEKRSHHKDHSDSESTSSDNSGKRRKGPFKTIKFGTNIDLSDDKKWKLQLHELTKLPAFVRVVSAGNLLSHVGHTILGMNTVQLYMKVPGSRTPGHQENNNFCSVNINIGPGDCEWFVVPEGYWGVLNDFCEKNNLNFLMGSWWPNLEDLYEANVPVYRFIQRPGDLVWINAGTVHWVQAIGWCNNIAWNVGPLTACQYKLAVERYEWNKLQNVKSIVPMVHLSWNMARNIKVSDPKLFEMIKYCLLRTLKQCQTLREALIAAGKEIIWHGRTKEEPAHYCSICEVEVFDLLFVTNESNSRKTYIVHCQDCARKTSGNLENFVVLEQYKMEDLMQVYDQFTLAPPLPSASS.

Residues 1–1095 (MKSCGVSLAT…TNIDLSDDKK (1095 aa)) are interaction with SUPT6H. TPR repeat units follow at residues 95–128 (SDFF…QSDY), 132–165 (AAFL…DPSF), 169–203 (KEIH…NPCT), 207–240 (AEIQ…ENLS), 245–285 (ATIL…DPNS), 286–319 (GQSW…SEAS), 321–353 (DTWC…DHGH), and 355–387 (AAWM…KNCS). Residues 439-453 (AMNTAQQNTSDNWSG) show a composition bias toward polar residues. The interval 439 to 463 (AMNTAQQNTSDNWSGGNAPPPVEQQ) is disordered. Residues Arg-519 and Arg-549 each carry the omega-N-methylarginine modification. Composition is skewed to polar residues over residues 596–606 (NHVTGSGSNGN), 619–642 (HNRT…STQG), and 660–743 (LSST…STAS). The interval 596 to 745 (NHVTGSGSNG…ETPNSTASVE (150 aa)) is disordered. Residue Ser-769 is modified to Phosphoserine. Disordered stretches follow at residues 795–863 (GTCD…EESQ), 914–941 (LLDK…PPTP), and 1043–1080 (FQES…GPFK). Residues 814–833 (SVASSPSSAISTATPSPKST) are compositionally biased toward low complexity. Thr-827 carries the post-translational modification Phosphothreonine. At Ser-829 the chain carries Phosphoserine. Polar residues predominate over residues 834–848 (EQTTTNSVTSLNSPH). Pro residues predominate over residues 918-931 (CPPPRPPSSPYPPL). The span at 1046 to 1063 (SLREENEKRSHHKDHSDS) shows a compositional bias: basic and acidic residues. The region spanning 1095–1258 (KWKLQLHELT…YKLAVERYEW (164 aa)) is the JmjC domain. Fe cation contacts are provided by His-1146, Glu-1148, and His-1226. Residues Cys-1331, Cys-1334, Cys-1358, and Cys-1361 each contribute to the Zn(2+) site.

It belongs to the UTX family. As to quaternary structure, component of the MLL2/3 complex (also named ASCOM complex), at least composed of KMT2D/MLL2 or KMT2C/MLL3, ASH2L, RBBP5, WDR5, NCOA6, DPY30, KDM6A (or KDM6B), PAXIP1/PTIP, PAGR1 and alpha- and beta-tubulin. Interacts with TLE1. Interacts with SUPT6H. Interacts with SMARCA4. Interacts with PROSER1. L-ascorbate is required as a cofactor. The cofactor is Fe(2+). In terms of tissue distribution, expressed in brain, heart and spleen.

It is found in the nucleus. The catalysed reaction is N(6),N(6),N(6)-trimethyl-L-lysyl(27)-[histone H3] + 2 2-oxoglutarate + 2 O2 = N(6)-methyl-L-lysyl(27)-[histone H3] + 2 formaldehyde + 2 succinate + 2 CO2. Histone demethylase that specifically demethylates 'Lys-27' of histone H3, thereby playing a central role in histone code. Demethylates trimethylated and dimethylated but not monomethylated H3 'Lys-27'. Plays a central role in regulation of posterior development, by regulating HOX gene expression. Demethylation of 'Lys-27' of histone H3 is concomitant with methylation of 'Lys-4' of histone H3, and regulates the recruitment of the PRC1 complex and monoubiquitination of histone H2A. Plays a demethylase-independent role in chromatin remodeling to regulate T-box family member-dependent gene expression. The protein is Lysine-specific demethylase 6A (Kdm6a) of Mus musculus (Mouse).